Here is a 510-residue protein sequence, read N- to C-terminus: Glycosyl hydrolase YngK (510 aa).

The first 30 residues, 1-30 (MKVCQKSIVRFLVSLIIGTFVISVPFMANA), serve as a signal peptide directing secretion.

This sequence belongs to the glycosyl hydrolase-like 10 (GHL10) family.

The chain is Glycosyl hydrolase YngK (yngK) from Bacillus subtilis (strain 168).